A 119-amino-acid polypeptide reads, in one-letter code: Large ribosomal subunit protein bL20 (119 aa).

The protein belongs to the bacterial ribosomal protein bL20 family.

Functionally, binds directly to 23S ribosomal RNA and is necessary for the in vitro assembly process of the 50S ribosomal subunit. It is not involved in the protein synthesizing functions of that subunit. The polypeptide is Large ribosomal subunit protein bL20 (Streptococcus suis (strain 98HAH33)).